Reading from the N-terminus, the 416-residue chain is Keratin, type I cuticular Ha1 (416 aa).

The tract at residues 2 to 56 (PYNCCLPALSCRTSCSSRPCVPPSCHGCTLPGACNIPANVGNCNWFCEGSFNGNE) is head. One can recognise an IF rod domain in the interval 56–367 (EKETMQFLND…GLLESEDCKL (312 aa)). The segment at 57–91 (KETMQFLNDRLASYMEKVRQLERENAELECRIQER) is coil 1A. The segment at 92–102 (NQQQDPLVCPA) is linker 1. Residues 103 to 203 (YQAYFRTIEE…HEEEVNTLRC (101 aa)) are coil 1B. The interval 204–219 (QLGDRLNVEVDAAPTV) is linker 12. The tract at residues 220 to 363 (DLNRVLNETR…NTYRGLLESE (144 aa)) is coil 2. Positions 364–416 (DCKLPCNPCATSNACGKPIGPCVSNPCVPCPPPAPCTPCVPRPRCGPCNSFVR) are tail.

Belongs to the intermediate filament family.

The chain is Keratin, type I cuticular Ha1 (Krt31) from Mus musculus (Mouse).